A 301-amino-acid polypeptide reads, in one-letter code: MANLRDIRKKIGSVKNTQKITHAMKLVSTSKLRKAEEVARNSRAYALKLDAVFDDVLSKMKNQGIEDIQSKYFRELERLEIKKVDIIFITADKGLCGGFNTNTIKKVLACTNEYKEKDIKVRLRGIGKKGNEYFSFNGIEVLDKINNLSSTPNYERAQEFMKKVVEDYLSGKTDKVIIIHNGFKNMITQEIRVKTILPIGYKIIHQNPQPNEVQETITSEPSGSEDEILDSLAEKYVEYSLYYALIDSLAAEHSARMQAMDTATNNAKDLVKTLTISYNKARQEAITTELVEINAGVEALK.

Belongs to the ATPase gamma chain family. F-type ATPases have 2 components, CF(1) - the catalytic core - and CF(0) - the membrane proton channel. CF(1) has five subunits: alpha(3), beta(3), gamma(1), delta(1), epsilon(1). CF(0) has three main subunits: a, b and c.

It localises to the cell inner membrane. Functionally, produces ATP from ADP in the presence of a proton gradient across the membrane. The gamma chain is believed to be important in regulating ATPase activity and the flow of protons through the CF(0) complex. In Helicobacter pylori (strain P12), this protein is ATP synthase gamma chain.